A 319-amino-acid polypeptide reads, in one-letter code: Acetyl esterase (319 aa).

Residues 91–93 (HGG) carry the Involved in the stabilization of the negatively charged intermediate by the formation of the oxyanion hole motif. Catalysis depends on residues Ser-165, Asp-262, and His-292.

It belongs to the 'GDXG' lipolytic enzyme family. Homodimer. Interacts with MalT and MelA.

It localises to the cytoplasm. Functionally, displays esterase activity towards short chain fatty esters (acyl chain length of up to 8 carbons). Able to hydrolyze triacetylglycerol (triacetin) and tributyrylglycerol (tributyrin), but not trioleylglycerol (triolein) or cholesterol oleate. Negatively regulates MalT activity by antagonizing maltotriose binding. Inhibits MelA galactosidase activity. In Escherichia coli (strain ATCC 8739 / DSM 1576 / NBRC 3972 / NCIMB 8545 / WDCM 00012 / Crooks), this protein is Acetyl esterase.